Consider the following 199-residue polypeptide: HTH-type transcriptional regulator BetI (199 aa).

Positions 8 to 68 (EIRKPQLVKA…ETMREILRQL (61 aa)) constitute an HTH tetR-type domain. Positions 31-50 (SISLISKEAGVSTGIINHYF) form a DNA-binding region, H-T-H motif.

It participates in amine and polyamine biosynthesis; betaine biosynthesis via choline pathway [regulation]. Repressor involved in the biosynthesis of the osmoprotectant glycine betaine. It represses transcription of the choline transporter BetT and the genes of BetAB involved in the synthesis of glycine betaine. The chain is HTH-type transcriptional regulator BetI from Vibrio campbellii (strain ATCC BAA-1116).